Reading from the N-terminus, the 595-residue chain is (E)-beta-ocimene synthase, chloroplastic (595 aa).

A chloroplast-targeting transit peptide spans 1-32 (MSTISINLMSIIRNPLHSKSKRALINKHPSSS). Asp-350 and Asp-354 together coordinate Mn(2+). The DDXXD motif motif lies at 350-354 (DDVYD). Homodimerization regions lie at residues 356-362 (YGTLDEL) and 428-465 (EEEW…LSIP). Asn-493 and Glu-501 together coordinate Mn(2+).

It belongs to the terpene synthase family. Homodimer. It depends on Mn(2+) as a cofactor. Mg(2+) serves as cofactor. Expressed in peltate glandular trichomes. Present in flowers, leaves and stems.

It localises to the plastid. The protein localises to the chloroplast. It catalyses the reaction (2E)-geranyl diphosphate = (E)-beta-ocimene + diphosphate. The protein operates within secondary metabolite biosynthesis; terpenoid biosynthesis. Functionally, involved in the biosynthesis of monoterpenes natural products. Monoterpene synthase that catalyzes mainly the formation of (E)-beta-ocimene and minor amounts of other monoterpenes (e.g. myrcene, (Z)-beta-ocimene, alpha- and gamma-terpinene) from geranyl diphosphate (GPP). This Origanum vulgare (Wild marjoram) protein is (E)-beta-ocimene synthase, chloroplastic.